Here is a 371-residue protein sequence, read N- to C-terminus: Protein arginine N-methyltransferase 1 (371 aa).

Residues 50-361 (KDYYFDSYAH…DLDFKGQLCE (312 aa)) enclose the SAM-dependent MTase PRMT-type domain. S-adenosyl-L-methionine-binding residues include His63, Arg72, Gly96, and Glu118. Residue Arg72 participates in S-adenosyl-L-homocysteine binding. Residue Glu118 participates in S-adenosyl-L-homocysteine binding. At Lys134 the chain carries N6-succinyllysine. Residue Lys145 forms a Glycyl lysine isopeptide (Lys-Gly) (interchain with G-Cter in ubiquitin) linkage. Residues Val146 and Glu147 each coordinate S-adenosyl-L-homocysteine. An S-adenosyl-L-methionine-binding site is contributed by Glu147. Residues Glu162 and Glu171 contribute to the active site. An N6-acetyllysine mark is found at Lys228 and Lys233. Phosphoserine is present on residues Ser304 and Ser307.

This sequence belongs to the class I-like SAM-binding methyltransferase superfamily. Protein arginine N-methyltransferase family. As to quaternary structure, homodimer. Homooctamer; individual homodimers associates to form a homooctamer. Individual homodimers can associate to form a homohexamer. Heterodimer with PRMT8. Interacts with BTG1, BTG2, NFATC2IP and IFNAR1. Interacts with and methylates CHTOP, thereby enabling the interaction of CHTOP with the 5FMC complex. Interacts with ILF3 and SUPT5H. Interacts with and methylates FOXO1, leading to the nuclear retention of FOXO1 and the stimulation of FOXO1 transcriptional activity. Methylation of FOXO1 is increased upon oxidative stress. Interacts with and probably methylates ATXN2L. Component of the methylosome, a 20S complex containing at least CLNS1A/pICln, PRMT5/SKB1, WDR77/MEP50, PRMT1 and ERH. Interacts with DHX9 (via RGG region). Interacts (via N-terminus) with HABP4. Interacts with MAP3K5/ASK1; the interaction results in MAP3K5 methylation by PRMT1 which inhibits MAP3K5 activation. Interacts with TRIM48; the interaction results in ubiquitination of PRMT1 by TRIM48, leading to PRMT1 proteasomal degradation and activation of MAP3K5. Interacts with GATOR1 complex; this interaction is S-adenosyl-L-methionine (SAM) dependent and is perturbated by SAMTOR in a SAM-sensitive manner. Interacts with GFI1; promoting recognition and binding of MRE11 and TP53BP1 substrates by PRMT1. Polyubiquitinated at Lys-145 by the SCF(FBXL17) complex, leading to its subsequent degradation. Ubiquitination is regulated by acetylation at Lys-228 and Lys-233. Polyubiquitinated by E3 ubiquitin-protein ligase TRIM48, leading to suppression of MAP3K5/ASK1 methylation and subsequent MAP3K5 activation. In terms of processing, acetylation at Lys-228 and Lys-233 regulates ubiquitination by the SCF(FBXL17) complex. Acetylated at Lys-233 by p300/EP300. Deacetylated at Lys-228 and Lys-233 by SIRT1. Widely expressed. Expressed strongly in colorectal cancer cells (at protein level). Expressed strongly in colorectal cancer tissues compared to wild-type colon samples (at protein level). Expressed strongly in colorectal cancer tissues compared to wild-type colon samples.

Its subcellular location is the nucleus. It localises to the nucleoplasm. It is found in the cytoplasm. The protein localises to the cytosol. The protein resides in the lysosome membrane. The catalysed reaction is L-arginyl-[protein] + 2 S-adenosyl-L-methionine = N(omega),N(omega)-dimethyl-L-arginyl-[protein] + 2 S-adenosyl-L-homocysteine + 2 H(+). It carries out the reaction L-arginyl-[protein] + S-adenosyl-L-methionine = N(omega)-methyl-L-arginyl-[protein] + S-adenosyl-L-homocysteine + H(+). The enzyme catalyses N(omega)-methyl-L-arginyl-[protein] + S-adenosyl-L-methionine = N(omega),N(omega)-dimethyl-L-arginyl-[protein] + S-adenosyl-L-homocysteine + H(+). In terms of biological role, arginine methyltransferase that methylates (mono and asymmetric dimethylation) the guanidino nitrogens of arginyl residues present in proteins such as ESR1, histone H2, H3 and H4, FMR1, ILF3, HNRNPA1, HNRNPD, NFATC2IP, SUPT5H, TAF15, EWS, HABP4, SERBP1, RBM15, FOXO1, CHTOP, MAP3K5/ASK1, MICU1 and NPRL2. Constitutes the main enzyme that mediates monomethylation and asymmetric dimethylation of histone H4 'Arg-3' (H4R3me1 and H4R3me2a, respectively), a specific tag for epigenetic transcriptional activation. May be involved in the regulation of TAF15 transcriptional activity, act as an activator of estrogen receptor (ER)-mediated transactivation, play a key role in neurite outgrowth and act as a negative regulator of megakaryocytic differentiation, by modulating p38 MAPK pathway. Methylates RBM15, promoting ubiquitination and degradation of RBM15. Methylates MRE11 and TP53BP1, promoting the DNA damage response. Methylates FOXO1 and retains it in the nucleus increasing its transcriptional activity. Methylates CHTOP and this methylation is critical for its 5-hydroxymethylcytosine (5hmC)-binding activity. Methylates MAP3K5/ASK1 at 'Arg-78' and 'Arg-80' which promotes association of MAP3K5 with thioredoxin and negatively regulates MAP3K5 association with TRAF2, inhibiting MAP3K5 stimulation and MAP3K5-induced activation of JNK. Methylates H4R3 in genes involved in glioblastomagenesis in a CHTOP- and/or TET1-dependent manner. Plays a role in regulating alternative splicing in the heart. Methylates NPRL2 at 'Arg-78' leading to inhibition of its GTPase activator activity and then the GATOR1 complex and consequently inducing timely mTORC1 activation under methionine-sufficient conditions. This is Protein arginine N-methyltransferase 1 from Homo sapiens (Human).